The chain runs to 382 residues: uncharacterized protein (382 aa).

In terms of domain architecture, PE spans 1–92 (MQFLSVIPEQ…GATAYRNTEF (92 aa)). Transmembrane regions (helical) follow at residues 23–43 (SALS…VSAA), 155–175 (AAVA…NGVV), 203–223 (FIVA…AVVG), 230–250 (TFLT…LAGV), 261–281 (LASG…VQLF), 284–304 (AFLL…IAVV), 315–335 (LVVP…AQFA), and 347–367 (LGAP…QGIG).

It belongs to the mycobacterial PE family.

The protein resides in the cell membrane. This is an uncharacterized protein from Mycobacterium bovis (strain ATCC BAA-935 / AF2122/97).